A 433-amino-acid polypeptide reads, in one-letter code: MSKKLFIQTLGCAMNVRDSEHMIAELEAKEGYTLTDDPKEADLILINTCSVREKPERKLFSEIGQFSKEKKEEAKIGVCGCTASHLGSEILKKAPSVSFVLGARNVSKISRVIHQEKAVEVATDYDDSSYVFATGSRNDYKAMVNISIGCDKKCAYCIVPHTRGQEISVPSDLILGEARRLASAGVKEILLLGQNVNHYGRRFSSAHPKISFTELLRELSQVEGIERLRFTSPHPLHMDDEFLEEFASNPKICKSIHMPLQSGSTRILSLMRRGYSQEWFINRVERLKALAPETTIGTDIIVGFPGESEEDFLGTMEVLERVRFETLYSFVYSPRPHTEAASWENLVDEEVASERLHRLQARHKEILEELNQKEVGAIHSVLWEHQRRDEGWCEGRTDTGKMVRMKGGEEFLGRITPVRIKEAYRAFLIGEPL.

Positions 3–118 (KKLFIQTLGC…ISRVIHQEKA (116 aa)) constitute an MTTase N-terminal domain. C12, C49, C81, C150, C154, and C157 together coordinate [4Fe-4S] cluster. In terms of domain architecture, Radical SAM core spans 136 to 369 (SRNDYKAMVN…QARHKEILEE (234 aa)). Positions 372–433 (QKEVGAIHSV…YRAFLIGEPL (62 aa)) constitute a TRAM domain.

This sequence belongs to the methylthiotransferase family. MiaB subfamily. As to quaternary structure, monomer. [4Fe-4S] cluster serves as cofactor.

The protein resides in the cytoplasm. It catalyses the reaction N(6)-dimethylallyladenosine(37) in tRNA + (sulfur carrier)-SH + AH2 + 2 S-adenosyl-L-methionine = 2-methylsulfanyl-N(6)-dimethylallyladenosine(37) in tRNA + (sulfur carrier)-H + 5'-deoxyadenosine + L-methionine + A + S-adenosyl-L-homocysteine + 2 H(+). Functionally, catalyzes the methylthiolation of N6-(dimethylallyl)adenosine (i(6)A), leading to the formation of 2-methylthio-N6-(dimethylallyl)adenosine (ms(2)i(6)A) at position 37 in tRNAs that read codons beginning with uridine. This is tRNA-2-methylthio-N(6)-dimethylallyladenosine synthase from Wolinella succinogenes (strain ATCC 29543 / DSM 1740 / CCUG 13145 / JCM 31913 / LMG 7466 / NCTC 11488 / FDC 602W) (Vibrio succinogenes).